Reading from the N-terminus, the 332-residue chain is MLRLGVSRTPINRQFVGYEQRRHFIVASALTLGGFVFGKRAKLADAMENGELHNKNNDDEAIRKDRMDKRLKKLSETRPIKPRYEGHVPLYPHERMLLFAISGLKSFFHPEDGNNIVKLGESSAFPFVLESLKQCMLGDETGRRILREQPNITSDTLDMDRLKKMDKNSLGYTYYTWLITEGVSPDTRAPVKYIDDPLQAFIFKRYRQCHDFYHAINGLPIIIEGEIAIKALEAANMGIPMAALGALLAPLRLKPIQKERLYDIYLPWAIRTGLSCKPLINVYWEELLEKDVNELRKELGIQPPPNLRAIRQERSKIRKELKMKYDAYEVGM.

Residues 1–24 (MLRLGVSRTPINRQFVGYEQRRHF) constitute a mitochondrion transit peptide. Residues His210, Asp211, His214, and Glu226 each contribute to the Zn(2+) site.

The protein belongs to the COQ4 family. As to quaternary structure, component of a multi-subunit COQ enzyme complex, composed of at least COQ3, COQ4, COQ5, COQ6, COQ7 and COQ9. Requires Zn(2+) as cofactor.

It localises to the mitochondrion inner membrane. It catalyses the reaction a 4-hydroxy-3-methoxy-5-(all-trans-polyprenyl)benzoate + H(+) = a 2-methoxy-6-(all-trans-polyprenyl)phenol + CO2. The protein operates within cofactor biosynthesis; ubiquinone biosynthesis. Functionally, lyase that catalyzes the C1-decarboxylation of 4-hydroxy-3-methoxy-5-(all-trans-polyprenyl)benzoic acid into 2-methoxy-6-(all-trans-polyprenyl)phenol during ubiquinone biosynthesis. In Zygosaccharomyces rouxii (strain ATCC 2623 / CBS 732 / NBRC 1130 / NCYC 568 / NRRL Y-229), this protein is Ubiquinone biosynthesis protein COQ4, mitochondrial.